The primary structure comprises 253 residues: Pimeloyl-[acyl-carrier protein] methyl ester esterase (253 aa).

Residues W18, 78–79, and 139–143 contribute to the substrate site; these read SL and FLALD. The active-site Nucleophile is the S78. Catalysis depends on residues D203 and H231. A substrate-binding site is contributed by H231.

The protein belongs to the AB hydrolase superfamily. Carboxylesterase BioH family. As to quaternary structure, monomer.

It localises to the cytoplasm. The catalysed reaction is 6-carboxyhexanoyl-[ACP] methyl ester + H2O = 6-carboxyhexanoyl-[ACP] + methanol + H(+). The protein operates within cofactor biosynthesis; biotin biosynthesis. Functionally, the physiological role of BioH is to remove the methyl group introduced by BioC when the pimeloyl moiety is complete. It allows to synthesize pimeloyl-ACP via the fatty acid synthetic pathway through the hydrolysis of the ester bonds of pimeloyl-ACP esters. The chain is Pimeloyl-[acyl-carrier protein] methyl ester esterase from Xanthomonas oryzae pv. oryzae (strain MAFF 311018).